The primary structure comprises 189 residues: Large ribosomal subunit protein bL25 (189 aa).

The protein belongs to the bacterial ribosomal protein bL25 family. CTC subfamily. Part of the 50S ribosomal subunit; part of the 5S rRNA/L5/L18/L25 subcomplex. Contacts the 5S rRNA. Binds to the 5S rRNA independently of L5 and L18.

This is one of the proteins that binds to the 5S RNA in the ribosome where it forms part of the central protuberance. The chain is Large ribosomal subunit protein bL25 from Azobacteroides pseudotrichonymphae genomovar. CFP2.